We begin with the raw amino-acid sequence, 433 residues long: Mannan endo-1,4-beta-mannosidase 2 (433 aa).

The signal sequence occupies residues 1-28 (MAAPTGNGPVIPILGFLTCVAFIYLSFG). A glycan (N-linked (GlcNAc...) asparagine) is linked at Asn-46. Trp-98 contributes to the substrate binding site. Asn-169 carries N-linked (GlcNAc...) asparagine glycosylation. A substrate-binding site is contributed by Asn-214. Catalysis depends on Glu-215, which acts as the Proton donor. Tyr-295 lines the substrate pocket. The Nucleophile role is filled by Glu-335. Position 377 (Trp-377) interacts with substrate.

It belongs to the glycosyl hydrolase 5 (cellulase A) family. In terms of tissue distribution, expressed in roots, stems, leaves and seeds.

The protein resides in the secreted. The enzyme catalyses Random hydrolysis of (1-&gt;4)-beta-D-mannosidic linkages in mannans, galactomannans and glucomannans.. In Arabidopsis thaliana (Mouse-ear cress), this protein is Mannan endo-1,4-beta-mannosidase 2 (MAN2).